The following is a 332-amino-acid chain: MNRPLGIIGAGAWGTALAIAAGHAGHPVRLWGRDTAAVQAMARDRVNRRNLPDCPLPDPVQPQPDLTALVAECDDLLLVVPSRAFESMLHTLAPLIERRHRLGWATKGLDAASGGLLSQVVQRVLKPLPPLAVLSGPSFAAEVGRGLPTAVTVAATDQGFASDLADAFRYERFRVYTSTDLVGVQLGGAVKNVLAIATGVADGLGFGANARAALITRGLAETRRLSEALGADPDTLTGLAGMGDLILTCTDDQSRNRRLGLALGRGEDLDEAVEAIGTVEGVRTADELHRLATQAGVEMPICEQVHLRLAGRVSTREAVENLLLRPGGRQEQ.

NADPH-binding residues include Trp-13, Arg-33, and Lys-107. 3 residues coordinate sn-glycerol 3-phosphate: Lys-107, Gly-136, and Ser-138. Ala-140 is an NADPH binding site. Sn-glycerol 3-phosphate contacts are provided by Lys-191, Asp-244, Ser-254, Arg-255, and Asn-256. The active-site Proton acceptor is the Lys-191. Arg-255 is a binding site for NADPH. Residue Glu-280 coordinates NADPH.

It belongs to the NAD-dependent glycerol-3-phosphate dehydrogenase family.

It is found in the cytoplasm. The enzyme catalyses sn-glycerol 3-phosphate + NAD(+) = dihydroxyacetone phosphate + NADH + H(+). It catalyses the reaction sn-glycerol 3-phosphate + NADP(+) = dihydroxyacetone phosphate + NADPH + H(+). The protein operates within membrane lipid metabolism; glycerophospholipid metabolism. Its function is as follows. Catalyzes the reduction of the glycolytic intermediate dihydroxyacetone phosphate (DHAP) to sn-glycerol 3-phosphate (G3P), the key precursor for phospholipid synthesis. The chain is Glycerol-3-phosphate dehydrogenase [NAD(P)+] from Alkalilimnicola ehrlichii (strain ATCC BAA-1101 / DSM 17681 / MLHE-1).